The chain runs to 157 residues: uncharacterized protein (157 aa).

Residues 42–64 form a helical membrane-spanning segment; the sequence is SCIRLIVMFICVAMITCPNSLRF.

The protein resides in the membrane. This is an uncharacterized protein from Saccharomyces cerevisiae (strain ATCC 204508 / S288c) (Baker's yeast).